Reading from the N-terminus, the 184-residue chain is MGLEEQLPGGILLSTVEKVAGYVRKNSLWPATFGLACCAIEMMATAGPRFDIARFGMERFSATPRQADLMIVAGRVSQKMAPVLRQIYDQMAEPKWVLAMGVCASSGGMFNNYAIVQGVDHVVPVDIYLPGCPPRPEMLLHAILKLHEKIQEMPLGVNRERAIAEAEEAAMLARPTIEMRGLLR.

Residues C37, C38, C103, and C132 each coordinate [4Fe-4S] cluster.

Belongs to the complex I 20 kDa subunit family. As to quaternary structure, NDH-1 is composed of 14 different subunits. Subunits NuoB, C, D, E, F, and G constitute the peripheral sector of the complex. The cofactor is [4Fe-4S] cluster.

It localises to the cell membrane. It catalyses the reaction a quinone + NADH + 5 H(+)(in) = a quinol + NAD(+) + 4 H(+)(out). NDH-1 shuttles electrons from NADH, via FMN and iron-sulfur (Fe-S) centers, to quinones in the respiratory chain. The immediate electron acceptor for the enzyme in this species is believed to be a menaquinone. Couples the redox reaction to proton translocation (for every two electrons transferred, four hydrogen ions are translocated across the cytoplasmic membrane), and thus conserves the redox energy in a proton gradient. The polypeptide is NADH-quinone oxidoreductase subunit B (Mycobacterium marinum (strain ATCC BAA-535 / M)).